We begin with the raw amino-acid sequence, 531 residues long: 2-isopropylmalate synthase (531 aa).

Residues I8–Y284 form the Pyruvate carboxyltransferase domain. Positions 17, 208, 210, and 244 each coordinate Mn(2+). Positions R408 to A531 are regulatory domain.

Belongs to the alpha-IPM synthase/homocitrate synthase family. LeuA type 1 subfamily. Homodimer. Requires Mn(2+) as cofactor.

Its subcellular location is the cytoplasm. It carries out the reaction 3-methyl-2-oxobutanoate + acetyl-CoA + H2O = (2S)-2-isopropylmalate + CoA + H(+). Its pathway is amino-acid biosynthesis; L-leucine biosynthesis; L-leucine from 3-methyl-2-oxobutanoate: step 1/4. Catalyzes the condensation of the acetyl group of acetyl-CoA with 3-methyl-2-oxobutanoate (2-ketoisovalerate) to form 3-carboxy-3-hydroxy-4-methylpentanoate (2-isopropylmalate). The protein is 2-isopropylmalate synthase of Nostoc sp. (strain PCC 7120 / SAG 25.82 / UTEX 2576).